The following is a 501-amino-acid chain: ATP synthase subunit alpha (501 aa).

Residue 169-176 (GDRQTGKT) participates in ATP binding.

Belongs to the ATPase alpha/beta chains family. As to quaternary structure, F-type ATPases have 2 components, CF(1) - the catalytic core - and CF(0) - the membrane proton channel. CF(1) has five subunits: alpha(3), beta(3), gamma(1), delta(1), epsilon(1). CF(0) has three main subunits: a(1), b(2) and c(9-12). The alpha and beta chains form an alternating ring which encloses part of the gamma chain. CF(1) is attached to CF(0) by a central stalk formed by the gamma and epsilon chains, while a peripheral stalk is formed by the delta and b chains.

It is found in the cell membrane. It catalyses the reaction ATP + H2O + 4 H(+)(in) = ADP + phosphate + 5 H(+)(out). Produces ATP from ADP in the presence of a proton gradient across the membrane. The alpha chain is a regulatory subunit. This is ATP synthase subunit alpha from Streptococcus pneumoniae (strain 70585).